Reading from the N-terminus, the 428-residue chain is Light-independent protochlorophyllide reductase subunit N (428 aa).

Residues cysteine 29, cysteine 54, and cysteine 115 each coordinate [4Fe-4S] cluster.

This sequence belongs to the BchN/ChlN family. Protochlorophyllide reductase is composed of three subunits; BchL, BchN and BchB. Forms a heterotetramer of two BchB and two BchN subunits. [4Fe-4S] cluster serves as cofactor.

It catalyses the reaction chlorophyllide a + oxidized 2[4Fe-4S]-[ferredoxin] + 2 ADP + 2 phosphate = protochlorophyllide a + reduced 2[4Fe-4S]-[ferredoxin] + 2 ATP + 2 H2O. It participates in porphyrin-containing compound metabolism; bacteriochlorophyll biosynthesis (light-independent). In terms of biological role, component of the dark-operative protochlorophyllide reductase (DPOR) that uses Mg-ATP and reduced ferredoxin to reduce ring D of protochlorophyllide (Pchlide) to form chlorophyllide a (Chlide). This reaction is light-independent. The NB-protein (BchN-BchB) is the catalytic component of the complex. This Cereibacter sphaeroides (strain ATCC 17029 / ATH 2.4.9) (Rhodobacter sphaeroides) protein is Light-independent protochlorophyllide reductase subunit N.